The primary structure comprises 304 residues: Pseudouridine-5'-phosphate glycosidase (304 aa).

The active-site Proton donor is the E25. Residues K86 and V106 each contribute to the substrate site. D138 serves as a coordination point for Mn(2+). 140–142 contacts substrate; that stretch reads SAD. The active-site Nucleophile is the K159.

The protein belongs to the pseudouridine-5'-phosphate glycosidase family. As to quaternary structure, homotrimer. It depends on Mn(2+) as a cofactor.

The enzyme catalyses D-ribose 5-phosphate + uracil = psi-UMP + H2O. Functionally, catalyzes the reversible cleavage of pseudouridine 5'-phosphate (PsiMP) to ribose 5-phosphate and uracil. Functions biologically in the cleavage direction, as part of a pseudouridine degradation pathway. In Lysinibacillus sphaericus (strain C3-41), this protein is Pseudouridine-5'-phosphate glycosidase.